The sequence spans 351 residues: Tryptophan--tRNA ligase (351 aa).

ATP contacts are provided by residues 11–13 (RPT) and 19–20 (GH). The 'HIGH' region motif lies at 12–20 (PTGALHLGH). Aspartate 139 is an L-tryptophan binding site. ATP is bound by residues 151–153 (GRD), leucine 190, and 198–202 (KMSKS). The short motif at 198–202 (KMSKS) is the 'KMSKS' region element.

It belongs to the class-I aminoacyl-tRNA synthetase family. In terms of assembly, homodimer.

It is found in the cytoplasm. The enzyme catalyses tRNA(Trp) + L-tryptophan + ATP = L-tryptophyl-tRNA(Trp) + AMP + diphosphate + H(+). Functionally, catalyzes the attachment of tryptophan to tRNA(Trp). The polypeptide is Tryptophan--tRNA ligase (Borreliella burgdorferi (strain ATCC 35210 / DSM 4680 / CIP 102532 / B31) (Borrelia burgdorferi)).